Here is a 384-residue protein sequence, read N- to C-terminus: Proteinase K (384 aa).

Positions 1-15 (MRLSVLLSLLPLALG) are cleaved as a signal peptide. Residues 16-105 (APAVEQRSEA…IEQDAVVTIN (90 aa)) constitute a propeptide that is removed on maturation. The region spanning 39-104 (KYIVKFKEGS…YIEQDAVVTI (66 aa)) is the Inhibitor I9 domain. Positions 112-384 (PWGLARISST…NLLAYNNYQA (273 aa)) constitute a Peptidase S8 domain. Threonine 121 lines the Ca(2+) pocket. The cysteines at positions 139 and 228 are disulfide-linked. Active-site charge relay system residues include aspartate 144 and histidine 174. 3 residues coordinate Ca(2+): proline 280, valine 282, and aspartate 305. Cysteine 283 and cysteine 354 are oxidised to a cystine. Serine 329 (charge relay system) is an active-site residue. Aspartate 365 provides a ligand contact to Ca(2+).

It belongs to the peptidase S8 family. The cofactor is Ca(2+).

The catalysed reaction is Hydrolysis of keratin, and of other proteins with subtilisin-like specificity. Hydrolyzes peptide amides.. Hydrolyzes keratin at aromatic and hydrophobic residues. This chain is Proteinase K (PROK), found in Parengyodontium album (Tritirachium album).